Reading from the N-terminus, the 206-residue chain is MPKVALYNINGEQVGEVELKDEVFGIEPHEHVMHEAVNMQLANQRQGTHDTKTRAEVRGGGRKPWRQKGTGRARAGSSRSPIWRKGGIVFGPHPRDYAISLPKKVRRLALKSALSSKVLDQNIIVLDSLTMDAPKTKDMVRILGNLKADKALVVTATRDLNVEKSARNIEGVKPLKADGVNVYDLLKYTKLVITKDAVAKIEEVLA.

A disordered region spans residues Asn43–Ser78. The segment covering Gly47–Gly59 has biased composition (basic and acidic residues). Basic residues predominate over residues Gly60–Gly71.

This sequence belongs to the universal ribosomal protein uL4 family. As to quaternary structure, part of the 50S ribosomal subunit.

In terms of biological role, one of the primary rRNA binding proteins, this protein initially binds near the 5'-end of the 23S rRNA. It is important during the early stages of 50S assembly. It makes multiple contacts with different domains of the 23S rRNA in the assembled 50S subunit and ribosome. Its function is as follows. Forms part of the polypeptide exit tunnel. The polypeptide is Large ribosomal subunit protein uL4 (Desulforamulus reducens (strain ATCC BAA-1160 / DSM 100696 / MI-1) (Desulfotomaculum reducens)).